The primary structure comprises 635 residues: Early transcription factor 70 kDa subunit (635 aa).

A Helicase ATP-binding domain is found at 32–185 (RSIIDENKSV…SNIISLMSDE (154 aa)). An ATP-binding site is contributed by 45 to 52 (HIMGSGKT). The DEXH box motif lies at 135 to 138 (DEAH). Positions 326-505 (KFKYFITKIE…TLPFDIKKLL (180 aa)) constitute a Helicase C-terminal domain.

It belongs to the helicase family. VETF subfamily. Heterodimer of a 70 kDa and a 82 kDa subunit. Part of the early transcription complex composed of ETF, RAP94, and the DNA-directed RNA polymerase.

It is found in the virion. Acts with RNA polymerase to initiate transcription from early gene promoters. Is recruited by the RPO-associated protein of 94 kDa (RAP94) to form the early transcription complex, which also contains the core RNA polymerase. ETF heterodimer binds to early gene promoters. The polypeptide is Early transcription factor 70 kDa subunit (VETFS) (Oryctolagus cuniculus (Rabbit)).